A 60-amino-acid chain; its full sequence is 5-hydroxytryptamine receptor 2B (60 aa).

Topologically, residues 1 to 4 (VLCP) are extracellular. Residues 5-26 (AWLFLDVLFSTASIMHLCAISV) traverse the membrane as a helical segment. Positions 10 and 15 each coordinate ergotamine. The short motif at 27-29 (DRY) is the DRY motif; important for ligand-induced conformation changes element. Residues 27-46 (DRYIAIKKPIQANQYNSRAT) are Cytoplasmic-facing. Residues 47 to 60 (AFIKITVVWLISIG) traverse the membrane as a helical segment.

This sequence belongs to the G-protein coupled receptor 1 family. Interacts (via C-terminus) with MPDZ. Detected in aorta, renal artery, jugular vein, vena cava and femoral vein.

Its subcellular location is the cell membrane. It localises to the synapse. It is found in the synaptosome. G-protein coupled receptor for 5-hydroxytryptamine (serotonin). Also functions as a receptor for various ergot alkaloid derivatives and psychoactive substances. Ligand binding causes a conformation change that triggers signaling via guanine nucleotide-binding proteins (G proteins) and modulates the activity of downstream effectors. HTR2B is coupled to G(q)/G(11) G alpha proteins and activates phospholipase C-beta, releasing diacylglycerol (DAG) and inositol 1,4,5-trisphosphate (IP3) second messengers that modulate the activity of phosphatidylinositol 3-kinase and promote the release of Ca(2+) ions from intracellular stores, respectively. Beta-arrestin family members inhibit signaling via G proteins and mediate activation of alternative signaling pathways. Plays a role in the regulation of dopamine and 5-hydroxytryptamine release, 5-hydroxytryptamine uptake and in the regulation of extracellular dopamine and 5-hydroxytryptamine levels, and thereby affects neural activity. May play a role in the perception of pain. Plays a role in the regulation of behavior, including impulsive behavior. Required for normal proliferation of embryonic cardiac myocytes and normal heart development. Protects cardiomyocytes against apoptosis. Plays a role in the adaptation of pulmonary arteries to chronic hypoxia. Plays a role in vasoconstriction. Required for normal osteoblast function and proliferation, and for maintaining normal bone density. Required for normal proliferation of the interstitial cells of Cajal in the intestine. In Sus scrofa (Pig), this protein is 5-hydroxytryptamine receptor 2B (HTR2B).